A 435-amino-acid chain; its full sequence is Histone acetyltransferase type B subunit 2 (435 aa).

WD repeat units follow at residues 135-175 (NHAG…SKAP), 188-228 (GQTK…KQDP), 238-278 (GHSA…TAKA), 284-324 (GHNA…TKHH), and 328-368 (AHTN…AEQT). The interaction with the histone H4 N-terminus stretch occupies residues 370-374 (DDAED). The stretch at 385–425 (GHTSKVCDISWSPSSPWTIASASEDNILQVWEPSRHLRTPY) is one WD 6 repeat.

Belongs to the WD repeat RBAP46/RBAP48/MSI1 family. In terms of assembly, component of the HAT-B complex composed of at least HAT1 and HAT2. The HAT-B complex binds to histone H4 tail.

It is found in the cytoplasm. Its subcellular location is the nucleus. Its function is as follows. Regulatory subunit of the histone acetylase B (HAT-B) complex. The complex acetylates 'Lys-12' of histone H4 which is required for telomeric silencing. The polypeptide is Histone acetyltransferase type B subunit 2 (HAT2) (Cryptococcus neoformans var. neoformans serotype D (strain B-3501A) (Filobasidiella neoformans)).